A 1040-amino-acid polypeptide reads, in one-letter code: Isoleucine--tRNA ligase (1040 aa).

A 'HIGH' region motif is present at residues 47–57; the sequence is PYCSGSIHLGT. Residues 605-609 carry the 'KMSKS' region motif; that stretch reads KMSKS. Residue Lys608 participates in ATP binding.

This sequence belongs to the class-I aminoacyl-tRNA synthetase family. IleS type 2 subfamily. As to quaternary structure, monomer. Zn(2+) serves as cofactor.

Its subcellular location is the cytoplasm. The enzyme catalyses tRNA(Ile) + L-isoleucine + ATP = L-isoleucyl-tRNA(Ile) + AMP + diphosphate. Its function is as follows. Catalyzes the attachment of isoleucine to tRNA(Ile). As IleRS can inadvertently accommodate and process structurally similar amino acids such as valine, to avoid such errors it has two additional distinct tRNA(Ile)-dependent editing activities. One activity is designated as 'pretransfer' editing and involves the hydrolysis of activated Val-AMP. The other activity is designated 'posttransfer' editing and involves deacylation of mischarged Val-tRNA(Ile). This chain is Isoleucine--tRNA ligase, found in Methanococcus aeolicus (strain ATCC BAA-1280 / DSM 17508 / OCM 812 / Nankai-3).